Here is a 474-residue protein sequence, read N- to C-terminus: Vitamin D-binding protein (474 aa).

Residues 1-16 (MKRILVFLLAVAFVHA) form the signal peptide. 3 Albumin domains span residues 17–208 (LERG…QLKH), 209–393 (FSLL…QLTR), and 394–474 (ELSS…TLQS). Cystine bridges form between Cys-29-Cys-75 and Cys-74-Cys-83. Asn-86 carries N-linked (GlcNAc...) asparagine glycosylation. Cystine bridges form between Cys-96–Cys-112, Cys-111–Cys-122, Cys-145–Cys-190, Cys-189–Cys-198, Cys-220–Cys-266, Cys-265–Cys-273, Cys-285–Cys-299, Cys-298–Cys-310, Cys-334–Cys-375, Cys-374–Cys-383, Cys-406–Cys-452, and Cys-451–Cys-461. N-linked (GlcNAc...) asparagine glycosylation occurs at Asn-287.

It belongs to the ALB/AFP/VDB family. As to quaternary structure, associates with membrane-bound immunoglobulin on the surface of B-lymphocytes and with IgG Fc receptor on the membranes of T-lymphocytes. Interacts with LRP2; the interaction is required for renal uptake of GC in complex with 25-hydroxyvitamin D3.

Its subcellular location is the secreted. Functionally, involved in vitamin D transport and storage, scavenging of extracellular G-actin, enhancement of the chemotactic activity of C5 alpha for neutrophils in inflammation and macrophage activation. This chain is Vitamin D-binding protein (GC), found in Bos taurus (Bovine).